The sequence spans 338 residues: Glycerol-3-phosphate dehydrogenase [NAD(P)+] (338 aa).

NADPH contacts are provided by serine 14, tyrosine 15, histidine 35, and lysine 109. 3 residues coordinate sn-glycerol 3-phosphate: lysine 109, glycine 138, and threonine 140. Alanine 142 is an NADPH binding site. Sn-glycerol 3-phosphate contacts are provided by lysine 194, aspartate 247, serine 257, arginine 258, and asparagine 259. Lysine 194 functions as the Proton acceptor in the catalytic mechanism. Arginine 258 contributes to the NADPH binding site. Positions 282 and 284 each coordinate NADPH.

Belongs to the NAD-dependent glycerol-3-phosphate dehydrogenase family.

It is found in the cytoplasm. The enzyme catalyses sn-glycerol 3-phosphate + NAD(+) = dihydroxyacetone phosphate + NADH + H(+). It catalyses the reaction sn-glycerol 3-phosphate + NADP(+) = dihydroxyacetone phosphate + NADPH + H(+). It functions in the pathway membrane lipid metabolism; glycerophospholipid metabolism. Catalyzes the reduction of the glycolytic intermediate dihydroxyacetone phosphate (DHAP) to sn-glycerol 3-phosphate (G3P), the key precursor for phospholipid synthesis. This chain is Glycerol-3-phosphate dehydrogenase [NAD(P)+], found in Shewanella sediminis (strain HAW-EB3).